A 149-amino-acid polypeptide reads, in one-letter code: Arginine repressor (149 aa).

This sequence belongs to the ArgR family.

It is found in the cytoplasm. The protein operates within amino-acid biosynthesis; L-arginine biosynthesis [regulation]. In terms of biological role, regulates arginine biosynthesis genes. This is Arginine repressor from Halalkalibacterium halodurans (strain ATCC BAA-125 / DSM 18197 / FERM 7344 / JCM 9153 / C-125) (Bacillus halodurans).